A 452-amino-acid polypeptide reads, in one-letter code: MPEAIVYLTETEICQKCKTENAVVHARVEKLCSNCYIRFIRGKLRKQMHDERYKVKFGRAVEQYGTQRILLALSGGESSLVLLDIFGSLLQEQNELHKGKQGFELVVVNLDEYELDSLNNRIQKVFPELLAKYQPVKISLNVLSLDSYVDEESLHRILLTPDFRAMSKSIDPTRVTLTEILRLCPNKSSAEDLLTIVYNDLILRVAAKEDCQTVVYGHCMTRLANEIIALTVKGRGSIIHKSIADHTETIDDKEIKVMFPLREILQAEISAYVKLAELNKYVISSTVQKSKINKNLTIRDLTTNYFKQLDATGYASTASTVAKTGEKLGSPSNVLCQCQICGADIHQNPSNWLKRITVTDPAAITTDEEKEYYEMFRASLSPDNEDKNNSDSPIDICFGCTVTLGGVKGDTGFIWPLQGSSELKYEYRNDNQEKQKVLDEFVLTDDEGDIEV.

The protein belongs to the CTU2/NCS2 family.

The protein localises to the cytoplasm. The protein operates within tRNA modification; 5-methoxycarbonylmethyl-2-thiouridine-tRNA biosynthesis. Functionally, plays a central role in 2-thiolation of mcm(5)S(2)U at tRNA wobble positions of tRNA(Lys), tRNA(Glu) and tRNA(Gln). May act by forming a heterodimer with NCS6 that ligates sulfur from thiocarboxylated URM1 onto the uridine of tRNAs at wobble position. Prior mcm(5) tRNA modification by the elongator complex is required for 2-thiolation. May also be involved in protein urmylation. This is Cytoplasmic tRNA 2-thiolation protein 2 from Candida albicans (strain SC5314 / ATCC MYA-2876) (Yeast).